Reading from the N-terminus, the 899-residue chain is Protein translocase subunit SecA (899 aa).

Residues Gln-87, 105 to 109 (GEGKT), and Asp-516 contribute to the ATP site. Cys-884, Cys-886, Cys-895, and His-896 together coordinate Zn(2+).

The protein belongs to the SecA family. In terms of assembly, monomer and homodimer. Part of the essential Sec protein translocation apparatus which comprises SecA, SecYEG and auxiliary proteins SecDF. Other proteins may also be involved. Requires Zn(2+) as cofactor.

The protein resides in the cell inner membrane. It localises to the cytoplasm. The catalysed reaction is ATP + H2O + cellular proteinSide 1 = ADP + phosphate + cellular proteinSide 2.. Functionally, part of the Sec protein translocase complex. Interacts with the SecYEG preprotein conducting channel. Has a central role in coupling the hydrolysis of ATP to the transfer of proteins into and across the cell membrane, serving as an ATP-driven molecular motor driving the stepwise translocation of polypeptide chains across the membrane. This Borreliella afzelii (strain PKo) (Borrelia afzelii) protein is Protein translocase subunit SecA.